We begin with the raw amino-acid sequence, 671 residues long: UvrABC system protein B (671 aa).

The Helicase ATP-binding domain maps to 25–178 (EGIKKGYKHQ…DAMLKKLVEI (154 aa)). 38-45 (GVTGSGKT) contacts ATP. Residues 91-114 (YYDYYQPEAYIPETDTYIEKDALI) carry the Beta-hairpin motif. The 167-residue stretch at 435–601 (QVEDLLEEIH…TVKSKIKDIL (167 aa)) folds into the Helicase C-terminal domain. A UVR domain is found at 626 to 661 (EETIKKLEQEMKHAAENLEFEKAAEIRDKIFKIKEK).

The protein belongs to the UvrB family. As to quaternary structure, forms a heterotetramer with UvrA during the search for lesions. Interacts with UvrC in an incision complex.

It localises to the cytoplasm. Functionally, the UvrABC repair system catalyzes the recognition and processing of DNA lesions. A damage recognition complex composed of 2 UvrA and 2 UvrB subunits scans DNA for abnormalities. Upon binding of the UvrA(2)B(2) complex to a putative damaged site, the DNA wraps around one UvrB monomer. DNA wrap is dependent on ATP binding by UvrB and probably causes local melting of the DNA helix, facilitating insertion of UvrB beta-hairpin between the DNA strands. Then UvrB probes one DNA strand for the presence of a lesion. If a lesion is found the UvrA subunits dissociate and the UvrB-DNA preincision complex is formed. This complex is subsequently bound by UvrC and the second UvrB is released. If no lesion is found, the DNA wraps around the other UvrB subunit that will check the other stand for damage. In Thermodesulfovibrio yellowstonii (strain ATCC 51303 / DSM 11347 / YP87), this protein is UvrABC system protein B.